Here is a 351-residue protein sequence, read N- to C-terminus: Heat-inducible transcription repressor HrcA (351 aa).

Belongs to the HrcA family.

Its function is as follows. Negative regulator of class I heat shock genes (grpE-dnaK-dnaJ and groELS operons). Prevents heat-shock induction of these operons. The protein is Heat-inducible transcription repressor HrcA of Fusobacterium nucleatum subsp. nucleatum (strain ATCC 25586 / DSM 15643 / BCRC 10681 / CIP 101130 / JCM 8532 / KCTC 2640 / LMG 13131 / VPI 4355).